The following is a 98-amino-acid chain: Protein translation factor SUI1 homolog (98 aa).

It belongs to the SUI1 family.

The polypeptide is Protein translation factor SUI1 homolog (Pyrococcus furiosus (strain ATCC 43587 / DSM 3638 / JCM 8422 / Vc1)).